The primary structure comprises 261 residues: tRNA pseudouridine synthase A (261 aa).

The active-site Nucleophile is aspartate 55. Residue tyrosine 114 participates in substrate binding.

It belongs to the tRNA pseudouridine synthase TruA family. As to quaternary structure, homodimer.

The enzyme catalyses uridine(38/39/40) in tRNA = pseudouridine(38/39/40) in tRNA. Formation of pseudouridine at positions 38, 39 and 40 in the anticodon stem and loop of transfer RNAs. The sequence is that of tRNA pseudouridine synthase A from Paracoccus denitrificans (strain Pd 1222).